Consider the following 536-residue polypeptide: Small conductance calcium-activated potassium channel protein 1 (536 aa).

Residues 1–90 (MSSRSHNGSV…KPPTVSHRLG (90 aa)) are disordered. The segment covering 65–75 (QEEEEEEEDED) has biased composition (acidic residues). Residues 107–127 (LIFGMFGIVVMVTETELSWGV) form a helical membrane-spanning segment. Residues 136–156 (FALKCLISLSTVILLGLVILY) form a helical membrane-spanning segment. The helical transmembrane segment at 224 to 244 (VLLSIPMFLRLYLLARVMLLH) threads the bilayer. A helical membrane pass occupies residues 273 to 293 (LMTICPGTVLLVFSISSWIVA). Residues 313–333 (FLGAMWLISITFLSIGYGDMV) form a helical membrane-spanning segment. Positions 342–362 (VCLLTGIMGAGCTALVVAVVA) form an intramembrane region, pore-forming. The calmodulin-binding stretch occupies residues 380–459 (DTQLTKRVKN…LADLAKAQSI (80 aa)). Residues 487–507 (VLGASLQALPSLIAQAICPLP) form a helical membrane-spanning segment. Positions 514-536 (SHLTTAAQSPQSHWLPTTASDCG) are disordered. Residues 515–536 (HLTTAAQSPQSHWLPTTASDCG) show a composition bias toward polar residues.

This sequence belongs to the potassium channel KCNN family. KCa2.1/KCNN1 subfamily. As to quaternary structure, homodimer. Heteromultimer with KCNN2 and KCNN3. The complex is composed of 4 channel subunits each of which binds to a calmodulin subunit which regulates the channel activity through calcium-binding. Interacts with calmodulin. In terms of tissue distribution, widely expressed including brain.

It localises to the membrane. The protein resides in the cytoplasm. The protein localises to the myofibril. It is found in the sarcomere. Its subcellular location is the z line. It catalyses the reaction K(+)(in) = K(+)(out). With respect to regulation, inhibited by bee venom neurotoxin apamin. Inhibited by d-tubocurarine and tetraethylammonium (TEA). Functionally, small conductance calcium-activated potassium channel that mediates the voltage-independent transmembrane transfer of potassium across the cell membrane through a constitutive interaction with calmodulin which binds the intracellular calcium allowing its opening. The current is characterized by a voltage-independent activation, an intracellular calcium concentration increase-dependent activation and a single-channel conductance of about 3 picosiemens. Also presents an inwardly rectifying current, thus reducing its already small outward conductance of potassium ions, which is particularly the case when the membrane potential displays positive values, above + 20 mV. Activation is followed by membrane hyperpolarization. Thought to regulate neuronal excitability by contributing to the slow component of synaptic afterhyperpolarization. The chain is Small conductance calcium-activated potassium channel protein 1 from Rattus norvegicus (Rat).